A 21-amino-acid polypeptide reads, in one-letter code: Protopolybiakinin-1 (21 aa).

Basic residues predominate over residues 1–11 (DKNKKPIRVGG). Residues 1–21 (DKNKKPIRVGGRRPPGFTPFR) are disordered.

The protein belongs to the bradykinin-related peptide family. As to expression, expressed by the venom gland.

It localises to the secreted. Its function is as follows. Causes constriction of the isolated rat ileum muscles (is 13-fold less potent than bradykinin (BK)), as well as degranulation of mast cells (is 7-fold more potent than BK). In vivo, causes algesic effects. Muscle constriction and algesic effects are partially mediated by bradykinin receptors B2 (BDKRB2). This Protopolybia exigua (Neotropical social wasp) protein is Protopolybiakinin-1.